We begin with the raw amino-acid sequence, 414 residues long: Glucose-1-phosphate adenylyltransferase (414 aa).

Residues G164, 181-182, and S199 contribute to the alpha-D-glucose 1-phosphate site; that span reads EK.

This sequence belongs to the bacterial/plant glucose-1-phosphate adenylyltransferase family. In terms of assembly, homotetramer.

It catalyses the reaction alpha-D-glucose 1-phosphate + ATP + H(+) = ADP-alpha-D-glucose + diphosphate. Its pathway is glycan biosynthesis; glycogen biosynthesis. Functionally, involved in the biosynthesis of ADP-glucose, a building block required for the elongation reactions to produce glycogen. Catalyzes the reaction between ATP and alpha-D-glucose 1-phosphate (G1P) to produce pyrophosphate and ADP-Glc. This chain is Glucose-1-phosphate adenylyltransferase, found in Kocuria rhizophila (strain ATCC 9341 / DSM 348 / NBRC 103217 / DC2201).